The following is a 232-amino-acid chain: RNA chaperone ProQ (232 aa).

The disordered stretch occupies residues 105–182 (EAKARVQAQR…REEQHTPVSD (78 aa)). Residues 117–136 (QQAKKREAAAAAGEKEDAPR) show a composition bias toward basic and acidic residues. Positions 137–146 (RERKPRPTTP) are enriched in basic residues. The span at 147-177 (RRKEGAERKPRAQKPVEKAPKTAKAPREEQH) shows a compositional bias: basic and acidic residues.

The protein belongs to the ProQ family.

Its subcellular location is the cytoplasm. RNA chaperone with significant RNA binding, RNA strand exchange and RNA duplexing activities. May regulate ProP activity through an RNA-based, post-transcriptional mechanism. This Shigella dysenteriae serotype 1 (strain Sd197) protein is RNA chaperone ProQ.